The primary structure comprises 617 residues: Dihydroxy-acid dehydratase (617 aa).

D81 contacts Mg(2+). Residue C122 coordinates [2Fe-2S] cluster. 2 residues coordinate Mg(2+): D123 and K124. The residue at position 124 (K124) is an N6-carboxylysine. C197 serves as a coordination point for [2Fe-2S] cluster. Residue E494 coordinates Mg(2+). The active-site Proton acceptor is the S520.

This sequence belongs to the IlvD/Edd family. In terms of assembly, homodimer. Requires [2Fe-2S] cluster as cofactor. Mg(2+) is required as a cofactor.

It catalyses the reaction (2R)-2,3-dihydroxy-3-methylbutanoate = 3-methyl-2-oxobutanoate + H2O. The enzyme catalyses (2R,3R)-2,3-dihydroxy-3-methylpentanoate = (S)-3-methyl-2-oxopentanoate + H2O. It participates in amino-acid biosynthesis; L-isoleucine biosynthesis; L-isoleucine from 2-oxobutanoate: step 3/4. Its pathway is amino-acid biosynthesis; L-valine biosynthesis; L-valine from pyruvate: step 3/4. In terms of biological role, functions in the biosynthesis of branched-chain amino acids. Catalyzes the dehydration of (2R,3R)-2,3-dihydroxy-3-methylpentanoate (2,3-dihydroxy-3-methylvalerate) into 2-oxo-3-methylpentanoate (2-oxo-3-methylvalerate) and of (2R)-2,3-dihydroxy-3-methylbutanoate (2,3-dihydroxyisovalerate) into 2-oxo-3-methylbutanoate (2-oxoisovalerate), the penultimate precursor to L-isoleucine and L-valine, respectively. The protein is Dihydroxy-acid dehydratase of Frankia casuarinae (strain DSM 45818 / CECT 9043 / HFP020203 / CcI3).